We begin with the raw amino-acid sequence, 437 residues long: Glutamate-1-semialdehyde 2,1-aminomutase 1 (437 aa).

K268 carries the post-translational modification N6-(pyridoxal phosphate)lysine.

Belongs to the class-III pyridoxal-phosphate-dependent aminotransferase family. HemL subfamily. Homodimer. Requires pyridoxal 5'-phosphate as cofactor.

The protein resides in the cytoplasm. The enzyme catalyses (S)-4-amino-5-oxopentanoate = 5-aminolevulinate. It participates in porphyrin-containing compound metabolism; protoporphyrin-IX biosynthesis; 5-aminolevulinate from L-glutamyl-tRNA(Glu): step 2/2. The polypeptide is Glutamate-1-semialdehyde 2,1-aminomutase 1 (Halalkalibacterium halodurans (strain ATCC BAA-125 / DSM 18197 / FERM 7344 / JCM 9153 / C-125) (Bacillus halodurans)).